Here is a 1406-residue protein sequence, read N- to C-terminus: MRPFLDDAKRRVDRRLSASKQSISTSRLLPSVLPDRFKDNHDAQVDFTAPPGGVGSREGHMQYMQQSIFSMIAAVGSRSDFHARFDESSDSDGETEGRSQTESPVKKVLGSSNPVNSQTEQRSGSQTSRKSEKDQSSRGRHHRRTISDHKFLRPFKTSSKPEPDTEPSTGDERLRVTLPRRPRSTTPRAAPILSRMVEAQAQFDSKTPSAGRSQNSSQESSIHSSHESSTSPLSTRLMEMFDFNKPEKVLVEYACSLLQSMLLQGYMYVTEGHICFYAYLPRKSTVAIKSGYLHKRGRKNPKYNRYWFSLKGDVLSYYADPSNLYFPSGHVDLRYGISASLAESKEKGREPKEFQVSTDQRTYHFRADSSVSAKEWVKALQKVIFRTHNEGDSVKVSFPIENIIDIEESPMMDFADTFKIRVVEDDDSYAIDEYFFSFFDSGREALTLLKSLVNENASGHSSRTLSPHADRSPRSDRTRRSRNRWSLTSGTSQPGNGSADTHRKRSASTSHLSLGPDAIPTSPVTRHQDPSESILNSFEQGTESSAVWQSMEDGAESASQILHRSDVFQSPTIHNLDKRACSDERSGRRQAGGTARSTLTHVNANKDGSPGEYSKLGNDGKPDREIRHVIHELDQETQGPSKPGPGAPTLNELVKAGTYPLQRAAGFAEYLRTRSKQMSNLLASESMGYIEKVSGMWVGGRRHYGEAEDVLPDDQAVDPEDKEDGCNYGDRFRAHFALPSTEKLQATYFAYLHRVLPLYGKIYISQKKLCFRSLIPGTRTKMILPLKDVENVEKEKGFRFGYQGLVIIIRGHEELFFEFRTSDARDDCAVTLHQHLESVKYLAESGLLAEQEKDESEAAMAEHRMLQEARLDDYGENDIPPLNESSGLHPIFDDPRASIVNFKPAESLRITCLTIGSRGDVQPYIALCKGLLAEGHKPKIATHAEFEPWVRRHGIDFAPVDGDPAELMRICVENGMFTYSFLKEASQKFRGWIDDLLSSAWASCQDSDLLIESPSAMAGIHIAEALRIPYFRAFTMPWSRTRAYPHAFAVPEHKMGGAYNYITYVMFDNVFWKAIAGQVNRWRKNELGLKATTLDKMQPNKVPFLYNYSPSVVPPPLDYPDWIRITGYWFLNEGVDWTPPVDLSAFIQRAREDDKKIVYIGFGSIVVSDPSALTRTVIESVQKADVRCILSKGWSDRLGDPSSAKTEVPLPPEIFQIQAAPHDWLFAQVDAAVHHGGAGTTGASLRAGIPTIIKPFFGDQFFFGSRIEDLGVGICMKKLNVSVFSRALWEATHSERMIIRARDLGAKIRDEDGVATAIQAIYRDLEHAKTLAQQRSIASSTPFSPTPSAKNTAEQGDDDVEDSEEWTFVGDDNEMDMSRRMRDRAISDAEMLPDRLLTNSIHGAGR.

Positions 83–231 (ARFDESSDSD…IHSSHESSTS (149 aa)) are disordered. Residues 110-128 (GSSNPVNSQTEQRSGSQTS) show a composition bias toward polar residues. A compositionally biased stretch (low complexity) spans 209–231 (SAGRSQNSSQESSIHSSHESSTS). The GRAM 1 domain occupies 236–286 (RLMEMFDFNKPEKVLVEYACSLLQSMLLQGYMYVTEGHICFYAYLPRKSTV). The 100-residue stretch at 286-385 (VAIKSGYLHK…WVKALQKVIF (100 aa)) folds into the PH domain. 2 disordered regions span residues 457–558 (ASGH…AESA) and 576–622 (LDKR…DGKP). Basic and acidic residues predominate over residues 468 to 478 (HADRSPRSDRT). Composition is skewed to polar residues over residues 490 to 499 (GTSQPGNGSA) and 531 to 548 (SESILNSFEQGTESSAVW). The segment covering 576–587 (LDKRACSDERSG) has biased composition (basic and acidic residues). Positions 730 to 796 (DRFRAHFALP…KDVENVEKEK (67 aa)) constitute a GRAM 2 domain. UDP-alpha-D-glucose is bound by residues S917, R918, D920, A1220, H1222, H1235, G1239, T1240, D1259, and Q1260. The segment at 1334–1406 (QRSIASSTPF…LTNSIHGAGR (73 aa)) is disordered. Residues 1336–1349 (SIASSTPFSPTPSA) show a composition bias toward low complexity. Acidic residues predominate over residues 1355–1375 (QGDDDVEDSEEWTFVGDDNEM). A compositionally biased stretch (basic and acidic residues) spans 1376 to 1387 (DMSRRMRDRAIS). The segment covering 1397–1406 (LTNSIHGAGR) has biased composition (polar residues).

The protein belongs to the glycosyltransferase 28 family.

It localises to the cytoplasm. The protein localises to the preautophagosomal structure membrane. It catalyses the reaction a sterol + UDP-alpha-D-glucose = a sterol 3-beta-D-glucoside + UDP + H(+). The catalysed reaction is ergosterol + UDP-alpha-D-glucose = ergosteryl 3-beta-D-glucoside + UDP + H(+). Functionally, sterol glycosyltransferase responsible for the glycosylation of ergosterol to form ergosterol-glucoside. The chain is Sterol 3-beta-glucosyltransferase from Aspergillus clavatus (strain ATCC 1007 / CBS 513.65 / DSM 816 / NCTC 3887 / NRRL 1 / QM 1276 / 107).